The sequence spans 371 residues: Uroporphyrinogen decarboxylase (371 aa).

Over residues 1 to 14 (MARWATMSTETTGT) the composition is skewed to polar residues. Positions 1 to 30 (MARWATMSTETTGTGARDEGPRPGDPADSP) are disordered. Substrate-binding positions include 49-53 (RQAGR), Asp-98, Tyr-173, Ser-228, and His-342.

This sequence belongs to the uroporphyrinogen decarboxylase family. In terms of assembly, homodimer.

It localises to the cytoplasm. It catalyses the reaction uroporphyrinogen III + 4 H(+) = coproporphyrinogen III + 4 CO2. It participates in porphyrin-containing compound metabolism; protoporphyrin-IX biosynthesis; coproporphyrinogen-III from 5-aminolevulinate: step 4/4. In terms of biological role, catalyzes the decarboxylation of four acetate groups of uroporphyrinogen-III to yield coproporphyrinogen-III. This is Uroporphyrinogen decarboxylase from Salinispora tropica (strain ATCC BAA-916 / DSM 44818 / JCM 13857 / NBRC 105044 / CNB-440).